The following is a 235-amino-acid chain: RNA polymerase sigma-E factor (235 aa).

The short motif at 82–95 (DLISVGTIGLIKAV) is the Polymerase core binding element. The H-T-H motif DNA-binding region spans 202–221 (QKEVADMLGISQSYISRLEK).

The protein belongs to the sigma-70 factor family.

Its function is as follows. Sigma factors are initiation factors that promote the attachment of RNA polymerase to specific initiation sites and are then released. This sigma factor is responsible for the expression of sporulation specific genes. This chain is RNA polymerase sigma-E factor (sigE), found in Clostridium acetobutylicum (strain ATCC 824 / DSM 792 / JCM 1419 / IAM 19013 / LMG 5710 / NBRC 13948 / NRRL B-527 / VKM B-1787 / 2291 / W).